Here is a 198-residue protein sequence, read N- to C-terminus: Probable GTP-binding protein EngB (198 aa).

The region spanning 22-195 (NIPEVALAGR…LEVIGRWVGL (174 aa)) is the EngB-type G domain. GTP contacts are provided by residues 30–37 (GRSNVGKS), 57–61 (GRTRL), 75–78 (DLPG), 142–145 (TKAD), and 174–176 (FSA). Positions 37 and 59 each coordinate Mg(2+).

This sequence belongs to the TRAFAC class TrmE-Era-EngA-EngB-Septin-like GTPase superfamily. EngB GTPase family. Mg(2+) serves as cofactor.

Its function is as follows. Necessary for normal cell division and for the maintenance of normal septation. This is Probable GTP-binding protein EngB from Pelotomaculum thermopropionicum (strain DSM 13744 / JCM 10971 / SI).